We begin with the raw amino-acid sequence, 460 residues long: DNA repair protein RAD57 (460 aa).

125 to 132 contributes to the ATP binding site; that stretch reads GESSTGKS.

This sequence belongs to the RecA family.

It localises to the nucleus. Functionally, participates in the repair of X-ray-induced damage to DNA and in meiosis. It may act in part by stabilizing a repair complex of other RAD genes. This is DNA repair protein RAD57 (RAD57) from Saccharomyces cerevisiae (strain ATCC 204508 / S288c) (Baker's yeast).